The following is a 497-amino-acid chain: Guanosine-5'-triphosphate,3'-diphosphate pyrophosphatase (497 aa).

This sequence belongs to the GppA/Ppx family. GppA subfamily.

The enzyme catalyses guanosine 3'-diphosphate 5'-triphosphate + H2O = guanosine 3',5'-bis(diphosphate) + phosphate + H(+). It participates in purine metabolism; ppGpp biosynthesis; ppGpp from GTP: step 2/2. Functionally, catalyzes the conversion of pppGpp to ppGpp. Guanosine pentaphosphate (pppGpp) is a cytoplasmic signaling molecule which together with ppGpp controls the 'stringent response', an adaptive process that allows bacteria to respond to amino acid starvation, resulting in the coordinated regulation of numerous cellular activities. The protein is Guanosine-5'-triphosphate,3'-diphosphate pyrophosphatase of Vibrio atlanticus (strain LGP32) (Vibrio splendidus (strain Mel32)).